The following is a 167-amino-acid chain: NADH-ubiquinone oxidoreductase chain 6 (167 aa).

5 helical membrane-spanning segments follow: residues 1 to 21 (MKMM…VAFA), 27 to 47 (VYGG…VVSL), 50 to 70 (VFLG…VFGY), 88 to 108 (VALS…LMSG), and 143 to 163 (WALV…LEVV).

The protein belongs to the complex I subunit 6 family. Core subunit of respiratory chain NADH dehydrogenase (Complex I) which is composed of 45 different subunits.

It localises to the mitochondrion inner membrane. It catalyses the reaction a ubiquinone + NADH + 5 H(+)(in) = a ubiquinol + NAD(+) + 4 H(+)(out). In terms of biological role, core subunit of the mitochondrial membrane respiratory chain NADH dehydrogenase (Complex I) which catalyzes electron transfer from NADH through the respiratory chain, using ubiquinone as an electron acceptor. Essential for the catalytic activity and assembly of complex I. In Osphranter robustus (Wallaroo), this protein is NADH-ubiquinone oxidoreductase chain 6 (MT-ND6).